Here is a 541-residue protein sequence, read N- to C-terminus: Chaperonin GroEL 1 (541 aa).

ATP is bound by residues Thr29–Pro32, Asp86–Thr90, Gly413, Asn478–Ala480, and Asp494. The segment at Val520–His541 is disordered. Positions Lys523–Gly533 are enriched in basic and acidic residues.

This sequence belongs to the chaperonin (HSP60) family. In terms of assembly, forms a cylinder of 14 subunits composed of two heptameric rings stacked back-to-back. Interacts with the co-chaperonin GroES.

The protein localises to the cytoplasm. It catalyses the reaction ATP + H2O + a folded polypeptide = ADP + phosphate + an unfolded polypeptide.. Functionally, together with its co-chaperonin GroES, plays an essential role in assisting protein folding. The GroEL-GroES system forms a nano-cage that allows encapsulation of the non-native substrate proteins and provides a physical environment optimized to promote and accelerate protein folding. In Mycolicibacterium gilvum (strain PYR-GCK) (Mycobacterium gilvum (strain PYR-GCK)), this protein is Chaperonin GroEL 1.